Reading from the N-terminus, the 272-residue chain is MMACHC-like protein (272 aa).

Substrate-binding positions include D121, 132-135 (ILMQ), and 146-148 (YYQ).

The protein belongs to the MMACHC family. The cofactor is FAD. FMN serves as cofactor.

It localises to the cytoplasm. Its function is as follows. Catalyzes the reductive dealkylation of cyanocobalamin to cob(II)alamin, using FAD or FMN as cofactor and NADPH as cosubstrate. Can also catalyze the glutathione-dependent reductive demethylation of methylcobalamin, and, with much lower efficiency, the glutathione-dependent reductive demethylation of adenosylcobalamin. Under anaerobic conditions cob(I)alamin is the first product; it is highly reactive and is converted to aquocob(II)alamin in the presence of oxygen. Binds cyanocobalamin, adenosylcobalamin, methylcobalamin and other, related vitamin B12 derivatives. The polypeptide is MMACHC-like protein (cblc-1) (Caenorhabditis elegans).